Consider the following 466-residue polypeptide: Anthocyanidin 3-O-glucosyltransferase 1 (466 aa).

The active-site Proton acceptor is His22. Residues His22 and Gln87 each coordinate an anthocyanidin. The active-site Charge relay is Asp122. Thr145 is a binding site for UDP-alpha-D-glucose. His154 provides a ligand contact to an anthocyanidin. UDP-alpha-D-glucose-binding residues include Ala346, Gln348, His363, Trp366, Asn367, Ser368, and Glu371. Residue Gly386 participates in an anthocyanidin binding. The UDP-alpha-D-glucose site is built by Asp387 and Gln388.

Belongs to the UDP-glycosyltransferase family. Highest expression detected in receptacles and achenes, with very low levels detected in runners, leaves, flowers, crowns and green receptacles.

The enzyme catalyses an anthocyanidin + UDP-alpha-D-glucose + H(+) = an anthocyanidin 3-O-beta-D-glucoside + UDP. It catalyses the reaction cyanidin + UDP-alpha-D-glucose = cyanidin 3-O-beta-D-glucoside + UDP + H(+). The catalysed reaction is pelargonidin + UDP-alpha-D-glucose = pelargonidin 3-O-beta-D-glucoside + UDP. It carries out the reaction peonidin + UDP-alpha-D-glucose = peonidin 3-O-beta-D-glucoside + UDP. The enzyme catalyses delphinidin + UDP-alpha-D-glucose = delphinidin 3-O-beta-D-glucoside + UDP. It catalyses the reaction a flavonol + UDP-alpha-D-glucose = a flavonol 3-O-beta-D-glucoside + UDP + H(+). It functions in the pathway pigment biosynthesis; anthocyanin biosynthesis. Its function is as follows. In the presence of other necessary color factors, this glycosylation reaction allows the accumulation of anthocyanin pigments. Uses UDP-Glc as a sugar donor, but not UDP-Gal or UDP-GlcUA. Anthocyanidins are the preferred substrates in vivo, but flavonols can also be glucosylated in vitro. The chain is Anthocyanidin 3-O-glucosyltransferase 1 from Fragaria ananassa (Strawberry).